A 316-amino-acid polypeptide reads, in one-letter code: HPr kinase/phosphorylase (316 aa).

Active-site residues include H143 and K164. 158–165 (GEAGSGKS) serves as a coordination point for ATP. Mg(2+) is bound at residue S165. The Proton acceptor; for phosphorylation activity. Proton donor; for dephosphorylation activity role is filled by D182. An important for the catalytic mechanism of both phosphorylation and dephosphorylation region spans residues 206 to 215 (LEVRGLGVLN). Residue E207 participates in Mg(2+) binding. R251 is an active-site residue. The interval 272 to 277 (PVMPGR) is important for the catalytic mechanism of dephosphorylation.

It belongs to the HPrK/P family. In terms of assembly, homohexamer. The cofactor is Mg(2+).

The catalysed reaction is [HPr protein]-L-serine + ATP = [HPr protein]-O-phospho-L-serine + ADP + H(+). The enzyme catalyses [HPr protein]-O-phospho-L-serine + phosphate + H(+) = [HPr protein]-L-serine + diphosphate. Functionally, catalyzes the ATP- as well as the pyrophosphate-dependent phosphorylation of a specific serine residue in HPr, a phosphocarrier protein of the phosphoenolpyruvate-dependent sugar phosphotransferase system (PTS). HprK/P also catalyzes the pyrophosphate-producing, inorganic phosphate-dependent dephosphorylation (phosphorolysis) of seryl-phosphorylated HPr (P-Ser-HPr). This Xylella fastidiosa (strain 9a5c) protein is HPr kinase/phosphorylase.